The following is a 101-amino-acid chain: Putative pterin-4-alpha-carbinolamine dehydratase (101 aa).

Belongs to the pterin-4-alpha-carbinolamine dehydratase family.

It catalyses the reaction (4aS,6R)-4a-hydroxy-L-erythro-5,6,7,8-tetrahydrobiopterin = (6R)-L-erythro-6,7-dihydrobiopterin + H2O. In Rhodopseudomonas palustris (strain HaA2), this protein is Putative pterin-4-alpha-carbinolamine dehydratase.